The primary structure comprises 339 residues: Ketol-acid reductoisomerase (NADP(+)) (339 aa).

One can recognise a KARI N-terminal Rossmann domain in the interval 1-182 (MRVYYDRDAD…GGGRAGIIET (182 aa)). Residues 24–27 (YGSQ), Arg48, Ser51, Ser53, and 83–86 (DELQ) contribute to the NADP(+) site. The active site involves His108. Gly134 is an NADP(+) binding site. One can recognise a KARI C-terminal knotted domain in the interval 183 to 328 (TFKEECETDL…ARLRDMMPWI (146 aa)). Residues Asp191, Glu195, Glu227, and Glu231 each contribute to the Mg(2+) site. Ser252 serves as a coordination point for substrate.

It belongs to the ketol-acid reductoisomerase family. The cofactor is Mg(2+).

The enzyme catalyses (2R)-2,3-dihydroxy-3-methylbutanoate + NADP(+) = (2S)-2-acetolactate + NADPH + H(+). It catalyses the reaction (2R,3R)-2,3-dihydroxy-3-methylpentanoate + NADP(+) = (S)-2-ethyl-2-hydroxy-3-oxobutanoate + NADPH + H(+). It participates in amino-acid biosynthesis; L-isoleucine biosynthesis; L-isoleucine from 2-oxobutanoate: step 2/4. It functions in the pathway amino-acid biosynthesis; L-valine biosynthesis; L-valine from pyruvate: step 2/4. Functionally, involved in the biosynthesis of branched-chain amino acids (BCAA). Catalyzes an alkyl-migration followed by a ketol-acid reduction of (S)-2-acetolactate (S2AL) to yield (R)-2,3-dihydroxy-isovalerate. In the isomerase reaction, S2AL is rearranged via a Mg-dependent methyl migration to produce 3-hydroxy-3-methyl-2-ketobutyrate (HMKB). In the reductase reaction, this 2-ketoacid undergoes a metal-dependent reduction by NADPH to yield (R)-2,3-dihydroxy-isovalerate. The polypeptide is Ketol-acid reductoisomerase (NADP(+)) (Bradyrhizobium sp. (strain ORS 278)).